Reading from the N-terminus, the 223-residue chain is Protein phosphatase 1 regulatory subunit 3C (223 aa).

The 106-residue stretch at arginine 104 to histidine 209 folds into the CBM21 domain.

As to quaternary structure, interacts with PPP1CC catalytic subunit of PP1 and associates with glycogen. Forms complexes with glycogen phosphorylase, glycogen synthase and phosphorylase kinase which is necessary for its regulation of PP1 activity.

In terms of biological role, acts as a glycogen-targeting subunit for PP1 and regulates its activity. Activates glycogen synthase, reduces glycogen phosphorylase activity and limits glycogen breakdown. The sequence is that of Protein phosphatase 1 regulatory subunit 3C from Xenopus tropicalis (Western clawed frog).